The following is a 361-amino-acid chain: Chitinase-3-like protein 1 (361 aa).

The 361-residue stretch at 1–361 (YKLICYYTSW…SAVKDVLAEV (361 aa)) folds into the GH18 domain. Cysteine 5 and cysteine 30 are joined by a disulfide. Asparagine 39 carries an N-linked (GlcNAc...) asparagine glycan. Chitin is bound by residues 49 to 50 (EW), 76 to 79 (GGWN), tyrosine 120, 183 to 186 (LTYD), and arginine 241. Residues cysteine 278 and cysteine 342 are joined by a disulfide bond. Residues 302–316 (QWVAYDDQESVKNKA) are important for AKT1 activation and IL8 production. Tryptophan 330 provides a ligand contact to chitin. Asparagine 345 carries N-linked (GlcNAc...) asparagine glycosylation.

It belongs to the glycosyl hydrolase 18 family. As to quaternary structure, monomer. In terms of tissue distribution, detected in mammary gland.

The protein localises to the secreted. It localises to the extracellular space. The protein resides in the cytoplasm. It is found in the perinuclear region. Its subcellular location is the endoplasmic reticulum. In terms of biological role, carbohydrate-binding lectin with a preference for chitin. Has no chitinase activity. May play a role in tissue remodeling and in the capacity of cells to respond to and cope with changes in their environment. Plays a role in T-helper cell type 2 (Th2) inflammatory response and IL-13-induced inflammation, regulating allergen sensitization, inflammatory cell apoptosis, dendritic cell accumulation and M2 macrophage differentiation. Facilitates invasion of pathogenic enteric bacteria into colonic mucosa and lymphoid organs. Mediates activation of AKT1 signaling pathway and subsequent IL8 production in colonic epithelial cells. Regulates antibacterial responses in lung by contributing to macrophage bacterial killing, controlling bacterial dissemination and augmenting host tolerance. Also regulates hyperoxia-induced injury, inflammation and epithelial apoptosis in lung. This Ovis aries (Sheep) protein is Chitinase-3-like protein 1 (CHI3L1).